Here is a 201-residue protein sequence, read N- to C-terminus: MLLSDRDIKAELTAGRLGLEPFEQGMIQPSSVDVRLDRFFRLFDNHKYPFIDPAEDQPDLTRFVEVVADQPFILHPGEFVLGSTFELVSLPDDVAARLEGKSSLGRLGLLTHSTAGFIDPGFSGHVTLELSNVATLPIKLWPGMKIGQMCFFRLSSAAEKPYGSAEYSSRYQGQRGPTASRSFLNFHRTDVSGTEAGRSSS.

Residues 101 to 106 (KSSLGR), aspartate 119, 127 to 129 (TLE), glutamine 148, tyrosine 162, and glutamine 174 each bind dCTP. Glutamate 129 acts as the Proton donor/acceptor in catalysis. Over residues 166–183 (EYSSRYQGQRGPTASRSF) the composition is skewed to polar residues. The segment at 166-201 (EYSSRYQGQRGPTASRSFLNFHRTDVSGTEAGRSSS) is disordered.

This sequence belongs to the dCTP deaminase family. As to quaternary structure, homotrimer.

It catalyses the reaction dCTP + 2 H2O = dUMP + NH4(+) + diphosphate. The protein operates within pyrimidine metabolism; dUMP biosynthesis; dUMP from dCTP: step 1/1. Bifunctional enzyme that catalyzes both the deamination of dCTP to dUTP and the hydrolysis of dUTP to dUMP without releasing the toxic dUTP intermediate. This chain is dCTP deaminase, dUMP-forming, found in Leifsonia xyli subsp. xyli (strain CTCB07).